Reading from the N-terminus, the 412-residue chain is Probable histone-binding protein rba-1 (412 aa).

WD repeat units lie at residues 117–157 (NHPG…SEPK), 169–209 (GHEG…TISG), 219–259 (GHSS…PQLT), 262–302 (GHTA…KKMY), 306–346 (HHND…DPSS), and 365–405 (GHTG…VSSE).

This sequence belongs to the WD repeat RBAP46/RBAP48/MSI1 family. As to quaternary structure, binds directly to helix 1 of the histone fold of histone H4, a region that is not accessible when H4 is in chromatin. Interacts with zft-11; the interaction is required to suppress the activation of non-neuronal genes in neurons.

It is found in the nucleus. Core histone-binding subunit that may target chromatin assembly factors, chromatin remodeling factors and histone deacetylases to their histone substrates in a manner that is regulated by nucleosomal DNA. Plays a role in regulating cell cycle progression. Required to repress the induction of vulval development by Ras signaling. In association with the zinc finger protein ztf-11, negatively regulates the expression of non-neuronal genes during neurogenesis. This is Probable histone-binding protein rba-1 from Caenorhabditis elegans.